The following is a 154-amino-acid chain: Lipoprotein signal peptidase (154 aa).

2 consecutive transmembrane segments (helical) span residues 52 to 72 (ILAG…IGIV) and 85 to 105 (LGVA…DRAV). Residues aspartate 111 and aspartate 129 contribute to the active site. A helical membrane pass occupies residues 124–144 (IFNIADSSLCVGVMLLFIQML).

This sequence belongs to the peptidase A8 family.

The protein resides in the cell membrane. It carries out the reaction Release of signal peptides from bacterial membrane prolipoproteins. Hydrolyzes -Xaa-Yaa-Zaa-|-(S,diacylglyceryl)Cys-, in which Xaa is hydrophobic (preferably Leu), and Yaa (Ala or Ser) and Zaa (Gly or Ala) have small, neutral side chains.. It participates in protein modification; lipoprotein biosynthesis (signal peptide cleavage). In terms of biological role, this protein specifically catalyzes the removal of signal peptides from prolipoproteins. The polypeptide is Lipoprotein signal peptidase (Bacillus subtilis (strain 168)).